Here is a 543-residue protein sequence, read N- to C-terminus: CTP synthase (543 aa).

The amidoligase domain stretch occupies residues 1 to 265 (MARFIFITGG…DSEVLRAFGI (265 aa)). S13 is a binding site for CTP. S13 is a UTP binding site. 14-19 (SLGKGL) provides a ligand contact to ATP. Position 54 (Y54) interacts with L-glutamine. D71 contacts ATP. The Mg(2+) site is built by D71 and E139. CTP-binding positions include 146–148 (DIE), 186–191 (KTKPTQ), and K222. UTP contacts are provided by residues 186–191 (KTKPTQ) and K222. The Glutamine amidotransferase type-1 domain maps to 291-542 (TIGVVGKYVS…IEAAVKQSRL (252 aa)). G354 lines the L-glutamine pocket. Catalysis depends on C381, which acts as the Nucleophile; for glutamine hydrolysis. L-glutamine-binding positions include 382-385 (LGMQ), E405, and R470. Active-site residues include H515 and E517.

It belongs to the CTP synthase family. In terms of assembly, homotetramer.

The catalysed reaction is UTP + L-glutamine + ATP + H2O = CTP + L-glutamate + ADP + phosphate + 2 H(+). It catalyses the reaction L-glutamine + H2O = L-glutamate + NH4(+). It carries out the reaction UTP + NH4(+) + ATP = CTP + ADP + phosphate + 2 H(+). It participates in pyrimidine metabolism; CTP biosynthesis via de novo pathway; CTP from UDP: step 2/2. With respect to regulation, allosterically activated by GTP, when glutamine is the substrate; GTP has no effect on the reaction when ammonia is the substrate. The allosteric effector GTP functions by stabilizing the protein conformation that binds the tetrahedral intermediate(s) formed during glutamine hydrolysis. Inhibited by the product CTP, via allosteric rather than competitive inhibition. Catalyzes the ATP-dependent amination of UTP to CTP with either L-glutamine or ammonia as the source of nitrogen. Regulates intracellular CTP levels through interactions with the four ribonucleotide triphosphates. The polypeptide is CTP synthase (Sphingopyxis alaskensis (strain DSM 13593 / LMG 18877 / RB2256) (Sphingomonas alaskensis)).